Here is a 311-residue protein sequence, read N- to C-terminus: MQIRLANPRGFCAGVDRAIDIVNRALEVFGPPIHVRHEVVHNRYVVEDLRQRGAVFVEELHEVPDDAIVIFSAHGVSKAVQEEAKRRQLQVFDATCPLVTKVHMEVIRYAREGRESILIGHAGHPEVEGTMGQYDKSYGGDIYLVEDEADVVALTVRDESKLAFVTQTTLSVDDTARVIDALRQRFPAIIGPKREDICYATTNRQDAVRQLALECGLVLVVGSVNSSNSNRLRELAERCGAEAYLIDEPSQIEASWLKGKAAVGVTAGASAPEDLVQQVIATLKNLGGEDAEEIPGREENIRFSMPKALRP.

Residue C12 coordinates [4Fe-4S] cluster. (2E)-4-hydroxy-3-methylbut-2-enyl diphosphate-binding residues include H41 and H74. The dimethylallyl diphosphate site is built by H41 and H74. The isopentenyl diphosphate site is built by H41 and H74. C96 contacts [4Fe-4S] cluster. H124 contributes to the (2E)-4-hydroxy-3-methylbut-2-enyl diphosphate binding site. H124 provides a ligand contact to dimethylallyl diphosphate. H124 serves as a coordination point for isopentenyl diphosphate. E126 serves as the catalytic Proton donor. T168 lines the (2E)-4-hydroxy-3-methylbut-2-enyl diphosphate pocket. Residue C198 participates in [4Fe-4S] cluster binding. Residues S226, S227, N228, and S270 each contribute to the (2E)-4-hydroxy-3-methylbut-2-enyl diphosphate site. Dimethylallyl diphosphate-binding residues include S226, S227, N228, and S270. Isopentenyl diphosphate contacts are provided by S226, S227, N228, and S270.

Belongs to the IspH family. [4Fe-4S] cluster serves as cofactor.

It catalyses the reaction isopentenyl diphosphate + 2 oxidized [2Fe-2S]-[ferredoxin] + H2O = (2E)-4-hydroxy-3-methylbut-2-enyl diphosphate + 2 reduced [2Fe-2S]-[ferredoxin] + 2 H(+). The catalysed reaction is dimethylallyl diphosphate + 2 oxidized [2Fe-2S]-[ferredoxin] + H2O = (2E)-4-hydroxy-3-methylbut-2-enyl diphosphate + 2 reduced [2Fe-2S]-[ferredoxin] + 2 H(+). The protein operates within isoprenoid biosynthesis; dimethylallyl diphosphate biosynthesis; dimethylallyl diphosphate from (2E)-4-hydroxy-3-methylbutenyl diphosphate: step 1/1. It functions in the pathway isoprenoid biosynthesis; isopentenyl diphosphate biosynthesis via DXP pathway; isopentenyl diphosphate from 1-deoxy-D-xylulose 5-phosphate: step 6/6. Catalyzes the conversion of 1-hydroxy-2-methyl-2-(E)-butenyl 4-diphosphate (HMBPP) into a mixture of isopentenyl diphosphate (IPP) and dimethylallyl diphosphate (DMAPP). Acts in the terminal step of the DOXP/MEP pathway for isoprenoid precursor biosynthesis. The chain is 4-hydroxy-3-methylbut-2-enyl diphosphate reductase from Alcanivorax borkumensis (strain ATCC 700651 / DSM 11573 / NCIMB 13689 / SK2).